Consider the following 232-residue polypeptide: 2-C-methyl-D-erythritol 4-phosphate cytidylyltransferase (232 aa).

It belongs to the IspD/TarI cytidylyltransferase family. IspD subfamily.

It carries out the reaction 2-C-methyl-D-erythritol 4-phosphate + CTP + H(+) = 4-CDP-2-C-methyl-D-erythritol + diphosphate. It functions in the pathway isoprenoid biosynthesis; isopentenyl diphosphate biosynthesis via DXP pathway; isopentenyl diphosphate from 1-deoxy-D-xylulose 5-phosphate: step 2/6. Catalyzes the formation of 4-diphosphocytidyl-2-C-methyl-D-erythritol from CTP and 2-C-methyl-D-erythritol 4-phosphate (MEP). The polypeptide is 2-C-methyl-D-erythritol 4-phosphate cytidylyltransferase (Rhodococcus erythropolis (strain PR4 / NBRC 100887)).